Consider the following 337-residue polypeptide: GTP 3',8-cyclase (337 aa).

One can recognise a Radical SAM core domain in the interval 18 to 242 (NFGRRFHYLR…DKADILDGPA (225 aa)). Arg-27 contributes to the GTP binding site. Residues Cys-34 and Cys-38 each contribute to the [4Fe-4S] cluster site. An S-adenosyl-L-methionine-binding site is contributed by Tyr-40. Cys-41 is a [4Fe-4S] cluster binding site. Residue Arg-76 participates in GTP binding. Position 80 (Gly-80) interacts with S-adenosyl-L-methionine. Thr-107 contacts GTP. Position 131 (Ser-131) interacts with S-adenosyl-L-methionine. Residue Lys-168 coordinates GTP. Met-202 lines the S-adenosyl-L-methionine pocket. [4Fe-4S] cluster-binding residues include Cys-265 and Cys-268. Residue 270-272 (RLR) participates in GTP binding. Cys-282 is a [4Fe-4S] cluster binding site.

Belongs to the radical SAM superfamily. MoaA family. In terms of assembly, monomer and homodimer. It depends on [4Fe-4S] cluster as a cofactor.

It carries out the reaction GTP + AH2 + S-adenosyl-L-methionine = (8S)-3',8-cyclo-7,8-dihydroguanosine 5'-triphosphate + 5'-deoxyadenosine + L-methionine + A + H(+). It participates in cofactor biosynthesis; molybdopterin biosynthesis. Functionally, catalyzes the cyclization of GTP to (8S)-3',8-cyclo-7,8-dihydroguanosine 5'-triphosphate. The protein is GTP 3',8-cyclase of Shewanella denitrificans (strain OS217 / ATCC BAA-1090 / DSM 15013).